Consider the following 690-residue polypeptide: Elongation factor G (690 aa).

The tr-type G domain occupies 8-282; the sequence is KMTRNIGIMA…AVIDYLPSPL (275 aa). GTP-binding positions include 17-24, 81-85, and 135-138; these read AHIDAGKT, DTPGH, and NKMD.

It belongs to the TRAFAC class translation factor GTPase superfamily. Classic translation factor GTPase family. EF-G/EF-2 subfamily.

The protein localises to the cytoplasm. In terms of biological role, catalyzes the GTP-dependent ribosomal translocation step during translation elongation. During this step, the ribosome changes from the pre-translocational (PRE) to the post-translocational (POST) state as the newly formed A-site-bound peptidyl-tRNA and P-site-bound deacylated tRNA move to the P and E sites, respectively. Catalyzes the coordinated movement of the two tRNA molecules, the mRNA and conformational changes in the ribosome. The protein is Elongation factor G of Acholeplasma laidlawii (strain PG-8A).